The sequence spans 281 residues: Energy-coupling factor transporter ATP-binding protein EcfA1 (281 aa).

The 236-residue stretch at 7-242 (IAAEDITFRY…NQDLIKIGLD (236 aa)) folds into the ABC transporter domain. Position 42 to 49 (42 to 49 (GHNGSGKS)) interacts with ATP.

This sequence belongs to the ABC transporter superfamily. Energy-coupling factor EcfA family. As to quaternary structure, forms a stable energy-coupling factor (ECF) transporter complex composed of 2 membrane-embedded substrate-binding proteins (S component), 2 ATP-binding proteins (A component) and 2 transmembrane proteins (T component).

Its subcellular location is the cell membrane. Functionally, ATP-binding (A) component of a common energy-coupling factor (ECF) ABC-transporter complex. Unlike classic ABC transporters this ECF transporter provides the energy necessary to transport a number of different substrates. In Bacillus licheniformis (strain ATCC 14580 / DSM 13 / JCM 2505 / CCUG 7422 / NBRC 12200 / NCIMB 9375 / NCTC 10341 / NRRL NRS-1264 / Gibson 46), this protein is Energy-coupling factor transporter ATP-binding protein EcfA1.